Consider the following 227-residue polypeptide: Glial cell line-derived neurotrophic factor (227 aa).

The first 19 residues, 1–19 (MKLWAILAVCILLLSSVSS), serve as a signal peptide directing secretion. The propeptide occupies 20–93 (IPLPSNWLAG…EFIQDTIKRL (74 aa)). 2 disordered regions span residues 32–61 (RSHLPDPQEGEDQVFGMDGAVPEDPTANMA) and 93–113 (LKRSSNKQPPSRRDRGRQSLA). Disulfide bonds link C134–C195, C161–C224, and C165–C226. N-linked (GlcNAc...) asparagine glycosylation is found at N142 and N178.

The protein belongs to the TGF-beta family. GDNF subfamily. As to quaternary structure, homodimer; disulfide-linked. Interacts with GFRA1 coreceptor and RET: forms a 2:2:2 ternary complex composed of GDNF ligand, GFRA1 and RET receptor. From stage 22, expressed in somites and the pronephros. At stage 24 and 26, expressed in the pharyngeal arches I-III. At stage 31, expression in the eye, central nervous system and pharyngeal arches IV and V increases. Up to stage 34, expression becomes intense at the oral cavity and lateral line structures. At this stage, expression weakens in the pharyngeal arches, and increases in the epibranchial arches. Expressed in the digestive tract in stage 34 embryos.

Its subcellular location is the secreted. Neurotrophic factor that enhances survival and morphological differentiation of dopaminergic neurons and increases their high-affinity dopamine uptake. Acts by binding to its coreceptor, GFRA1, leading to autophosphorylation and activation of the RET receptor. This is Glial cell line-derived neurotrophic factor from Xenopus laevis (African clawed frog).